A 415-amino-acid polypeptide reads, in one-letter code: Glutamyl-tRNA reductase (415 aa).

Substrate contacts are provided by residues 49 to 52 (TCNR), Ser104, 109 to 111 (EPQ), and Gln115. Residue Cys50 is the Nucleophile of the active site. Residue 184-189 (GAGEMI) participates in NADP(+) binding.

Belongs to the glutamyl-tRNA reductase family. Homodimer.

The catalysed reaction is (S)-4-amino-5-oxopentanoate + tRNA(Glu) + NADP(+) = L-glutamyl-tRNA(Glu) + NADPH + H(+). It functions in the pathway porphyrin-containing compound metabolism; protoporphyrin-IX biosynthesis; 5-aminolevulinate from L-glutamyl-tRNA(Glu): step 1/2. Its function is as follows. Catalyzes the NADPH-dependent reduction of glutamyl-tRNA(Glu) to glutamate 1-semialdehyde (GSA). The sequence is that of Glutamyl-tRNA reductase from Neisseria meningitidis serogroup C (strain 053442).